We begin with the raw amino-acid sequence, 263 residues long: Isatin hydrolase (263 aa).

62-66 (FFAWN) is a binding site for substrate. Positions 73, 77, and 79 each coordinate Mn(2+). The active-site Proton donor/acceptor is His83. His212 serves as a coordination point for substrate.

This sequence belongs to the Cyclase 1 superfamily. Homodimer. Mn(2+) serves as cofactor.

It carries out the reaction isatin + H2O = isatinate + H(+). With respect to regulation, inhibited by thioisatinate. In terms of biological role, involved in the degradation of the plant hormone indole-3-acetic acid (IAA). Catalyzes the hydrolysis of the cyclic amide bond (lactam) of isatin (1H-indole-2,3-dione) to yield isatinate (2-(2-aminophenyl)-2-oxoacetate). The polypeptide is Isatin hydrolase (Roseibium aggregatum (strain ATCC 25650 / DSM 13394 / JCM 20685 / NBRC 16684 / NCIMB 2208 / IAM 12614 / B1) (Stappia aggregata)).